The sequence spans 410 residues: Proteasome-activating nucleotidase (410 aa).

Positions 1 to 70 form a coiled coil; it reads MENNSQNVLK…LRGEIERFRT (70 aa). ATP contacts are provided by residues 195-200 and histidine 334; that span reads GTGKTL. The segment at 408 to 410 is docks into pockets in the proteasome alpha-ring to cause gate opening; it reads MFG.

The protein belongs to the AAA ATPase family. Homohexamer. The hexameric complex has a two-ring architecture resembling a top hat that caps the 20S proteasome core at one or both ends. Upon ATP-binding, the C-terminus of PAN interacts with the alpha-rings of the proteasome core by binding to the intersubunit pockets.

It localises to the cytoplasm. In terms of biological role, ATPase which is responsible for recognizing, binding, unfolding and translocation of substrate proteins into the archaeal 20S proteasome core particle. Is essential for opening the gate of the 20S proteasome via an interaction with its C-terminus, thereby allowing substrate entry and access to the site of proteolysis. Thus, the C-termini of the proteasomal ATPase function like a 'key in a lock' to induce gate opening and therefore regulate proteolysis. Unfolding activity requires energy from ATP hydrolysis, whereas ATP binding alone promotes ATPase-20S proteasome association which triggers gate opening, and supports translocation of unfolded substrates. This Methanothermobacter thermautotrophicus (strain ATCC 29096 / DSM 1053 / JCM 10044 / NBRC 100330 / Delta H) (Methanobacterium thermoautotrophicum) protein is Proteasome-activating nucleotidase.